Reading from the N-terminus, the 77-residue chain is Putative defensin-like protein 30 (77 aa).

A signal peptide spans 1 to 26 (MASSSKCAFLVFLCMIVLLAPSEVHA). Cystine bridges form between Cys43-Cys63, Cys49-Cys72, and Cys53-Cys74.

This sequence belongs to the DEFL family.

The protein resides in the secreted. The protein is Putative defensin-like protein 30 of Arabidopsis thaliana (Mouse-ear cress).